We begin with the raw amino-acid sequence, 209 residues long: N-(5'-phosphoribosyl)anthranilate isomerase (209 aa).

This sequence belongs to the TrpF family.

The catalysed reaction is N-(5-phospho-beta-D-ribosyl)anthranilate = 1-(2-carboxyphenylamino)-1-deoxy-D-ribulose 5-phosphate. Its pathway is amino-acid biosynthesis; L-tryptophan biosynthesis; L-tryptophan from chorismate: step 3/5. In Granulibacter bethesdensis (strain ATCC BAA-1260 / CGDNIH1), this protein is N-(5'-phosphoribosyl)anthranilate isomerase.